The chain runs to 419 residues: Putative polyketide beta-ketoacyl synthase 2 (419 aa).

Positions 10–413 constitute a Ketosynthase family 3 (KS3) domain; sequence TRRTAVTGIG…GSNAALVLRP (404 aa).

The protein belongs to the thiolase-like superfamily. Beta-ketoacyl-ACP synthases family.

Its pathway is antibiotic biosynthesis; curamycin biosynthesis. This Streptomyces cyaneus (Streptomyces curacoi) protein is Putative polyketide beta-ketoacyl synthase 2 (curB).